Here is a 431-residue protein sequence, read N- to C-terminus: MSHFAAIAPPFYSHVRALQNLAQELVARGHRVTFIQQYDIKHLIDSETIGFHSVGTDSHPPGALTRVLHLAAHPLGPSMLKLINEMARTTDMLCRELPQAFNDLAVDGVIVDQMEPAGALVAEALGLPFISVACALPLNREPDMPLAVMPFEYGTSDAARERYAASEKIYDWLMRRHDRVIAEHSHRMGLAPRQKLHQCFSPLAQISQLVPELDFPRKALPACFHAVGPLRETHAPSTSSSRYFTSSEKPRIFASLGTLQGHRYGLFKTIVKACEEIDGQLLLAHCGRLTDSQCEELARSRHTQVVDFADQSAALSQAQLAITHGGMNTVLDAINYRTPLLALPLAFDQPGVASRIVYHGIGKRASRFTTSHALARQMRSLLTNVDFQQRMAKIQTALRLAGGTMAAADIIEQVMCTGQPVLSGSGYATAL.

This sequence belongs to the UDP-glycosyltransferase family.

It carries out the reaction all-trans-zeaxanthin + 2 UDP-alpha-D-glucose = zeaxanthin bis(beta-D-glucoside) + 2 UDP + 2 H(+). Its pathway is carotenoid biosynthesis; zeaxanthin diglucoside biosynthesis. Catalyzes the glycosylation reaction which converts zeaxanthin to zeaxanthin bis(beta-D-glucoside). The reaction proceeds in two steps with the monoglucoside as an intermediate. The sequence is that of Zeaxanthin glucosyltransferase (crtX) from Pantoea ananas (Erwinia uredovora).